A 473-amino-acid polypeptide reads, in one-letter code: Ribulose bisphosphate carboxylase large chain 2 (473 aa).

2 residues coordinate substrate: asparagine 116 and threonine 166. Lysine 168 (proton acceptor) is an active-site residue. Residue lysine 170 coordinates substrate. Lysine 194, aspartate 196, and glutamate 197 together coordinate Mg(2+). An N6-carboxylysine modification is found at lysine 194. Histidine 287 acts as the Proton acceptor in catalysis. Substrate contacts are provided by arginine 288, histidine 320, and serine 372.

It belongs to the RuBisCO large chain family. Type I subfamily. Heterohexadecamer of 8 large chains and 8 small chains. Mg(2+) serves as cofactor.

The catalysed reaction is 2 (2R)-3-phosphoglycerate + 2 H(+) = D-ribulose 1,5-bisphosphate + CO2 + H2O. It carries out the reaction D-ribulose 1,5-bisphosphate + O2 = 2-phosphoglycolate + (2R)-3-phosphoglycerate + 2 H(+). In terms of biological role, ruBisCO catalyzes two reactions: the carboxylation of D-ribulose 1,5-bisphosphate, the primary event in carbon dioxide fixation, as well as the oxidative fragmentation of the pentose substrate. Both reactions occur simultaneously and in competition at the same active site. This is Ribulose bisphosphate carboxylase large chain 2 from Acidithiobacillus ferrooxidans (Thiobacillus ferrooxidans).